Consider the following 238-residue polypeptide: uncharacterized protein (238 aa).

Positions 1-64 (MRLDKYLSKS…KPKKNVYLML (64 aa)) constitute an S4 RNA-binding domain. D103 (nucleophile) is an active-site residue.

Belongs to the pseudouridine synthase RsuA family.

The catalysed reaction is a uridine in RNA = a pseudouridine in RNA. This is an uncharacterized protein from Aquifex aeolicus (strain VF5).